A 236-amino-acid chain; its full sequence is Ribose-5-phosphate isomerase A 2 (236 aa).

Residues 31–34 (SGTT), 86–89 (DGPD), and 99–102 (KGGG) contribute to the substrate site. The Proton acceptor role is filled by Glu108. A substrate-binding site is contributed by Lys126.

It belongs to the ribose 5-phosphate isomerase family. As to quaternary structure, homodimer.

The enzyme catalyses aldehydo-D-ribose 5-phosphate = D-ribulose 5-phosphate. It participates in carbohydrate degradation; pentose phosphate pathway; D-ribose 5-phosphate from D-ribulose 5-phosphate (non-oxidative stage): step 1/1. Its function is as follows. Catalyzes the reversible conversion of ribose-5-phosphate to ribulose 5-phosphate. The sequence is that of Ribose-5-phosphate isomerase A 2 from Yersinia pestis.